Consider the following 547-residue polypeptide: Germacrene A synthase (547 aa).

Asp300, Asp304, Asp443, and Glu451 together coordinate Mg(2+). A DDXXD motif motif is present at residues 300 to 304 (DDTYD).

It belongs to the terpene synthase family. Tpsa subfamily. Requires Mg(2+) as cofactor. The cofactor is Mn(2+). Expressed in leaves.

The protein localises to the plastid. It localises to the chloroplast. It carries out the reaction (2E,6E)-farnesyl diphosphate = germacrene A + diphosphate. It catalyses the reaction (2E,6E)-farnesyl diphosphate = (1S,2S,4R)-beta-elemene + diphosphate. Its pathway is secondary metabolite biosynthesis; terpenoid biosynthesis. Sesquiterpene synthase involved in the biosynthesis of volatile compounds widely used in aromatherapy and folk medicine, and present in culinary herbs. Mediates the conversion of (2E,6E)-farnesyl diphosphate (FPP) into germacrene A and beta-elemene. Not able to use (2E)-geranyl diphosphate (GPP) as substrate. This chain is Germacrene A synthase, found in Lavandula pedunculata subsp. lusitanica (French lavender).